A 414-amino-acid polypeptide reads, in one-letter code: 11-beta-hydroxysteroid dehydrogenase type 2 (414 aa).

A run of 4 helical transmembrane segments spans residues 3-23 (DFAV…GGAV), 26-46 (FLAF…ATLL), 52-72 (ALCM…WLYF), and 341-361 (YYAG…PLSI). Residues 382–414 (KQQGLSPNDNNNSIKENMNDSSSNNSNFTKCID) form a disordered region. The segment covering 384-397 (QGLSPNDNNNSIKE) has biased composition (polar residues).

It belongs to the short-chain dehydrogenases/reductases (SDR) family. As to expression, broadly expressed in peripheral (brain, gill, eye, heart, liver, head kidney, posterior kidney, and gut).

The protein localises to the membrane. The enzyme catalyses an 11beta-hydroxysteroid + NAD(+) = an 11-oxosteroid + NADH + H(+). It carries out the reaction cortisol + NAD(+) = cortisone + NADH + H(+). It catalyses the reaction corticosterone + NAD(+) = 11-dehydrocorticosterone + NADH + H(+). The catalysed reaction is 11beta,17beta-dihydroxyandrost-4-ene-3-one + NAD(+) = 17beta-hydroxyandrost-4-ene-3,11-dione + NADH + H(+). The enzyme catalyses 11beta-hydroxyandrost-4-ene-3,17-dione + NAD(+) = androst-4-ene-3,11,17-trione + NADH + H(+). It functions in the pathway steroid metabolism. Catalyzes the conversion of biologically active 11beta-hydroxyglucocorticoids (11beta-hydroxysteroid) such as cortisol, to inactive 11-ketoglucocorticoids (11-oxosteroid) such as cortisone, in the presence of NAD(+). Cortisol is the primary glucocorticoid in teleosts and is released to increase glucose bioavailability in order to meet the increased energy demands in response to stress. Functions as a dehydrogenase (oxidase), thereby decreasing the concentration of active glucocorticoids, regulating the hypothalamus-pituitary-interrenal (HPI) axis function in adult fish. Decreasing the excess glucocorticoids may be of relevance to brain function and neural proliferation. Plays a key role by catalyzing the oxidation of 11beta-hydroxytestosterone (11beta,17beta-dihydroxyandrost-4-ene-3-one) to 11-ketotestosterone (17beta-hydroxyandrost-4-ene-3,11-dione), the major fish androgen, that activates androgen receptor transcriptional activity. Catalyzes the conversion of 11beta-hydroxyandrostenedione (11beta-hydroxyandrost-4-ene-3,17-dione) to 11-ketoandrostenedione (androst-4-ene-3,11,17-trione), which can be further metabolized to 11-ketotestosterone. Exerts a dual role in fish by inactivating glucocorticoids and activating androgens. This chain is 11-beta-hydroxysteroid dehydrogenase type 2 (hsd11b2), found in Danio rerio (Zebrafish).